The chain runs to 82 residues: Exodeoxyribonuclease 7 small subunit (82 aa).

The protein belongs to the XseB family. Heterooligomer composed of large and small subunits.

Its subcellular location is the cytoplasm. It carries out the reaction Exonucleolytic cleavage in either 5'- to 3'- or 3'- to 5'-direction to yield nucleoside 5'-phosphates.. In terms of biological role, bidirectionally degrades single-stranded DNA into large acid-insoluble oligonucleotides, which are then degraded further into small acid-soluble oligonucleotides. The sequence is that of Exodeoxyribonuclease 7 small subunit from Mycobacterium marinum (strain ATCC BAA-535 / M).